Consider the following 791-residue polypeptide: von Willebrand factor A domain-containing protein 2 (791 aa).

The signal sequence occupies residues Met1 to Ser23. Residues Asp51–Leu221 form the VWFA 1 domain. A glycan (N-linked (GlcNAc...) asparagine) is linked at Asn146. One can recognise an EGF-like 1 domain in the interval Pro295–Ala332. 3 disulfide bridges follow: Cys298-Cys309, Cys303-Cys319, and Cys321-Cys331. VWFA domains are found at residues Asp342 to Leu516 and Asp530 to Leu704. One can recognise an EGF-like 2 domain in the interval Pro711 to Glu747. Cystine bridges form between Cys715-Cys726, Cys720-Cys735, and Cys737-Cys746. The segment at His762 to Lys791 is disordered.

Forms monomers and multimers. In terms of tissue distribution, detected in uterus, kidney, and skin. Also detected in intestine and lung of adult mice, and in calvaria, femur, brain, heart, intestine, skeletal muscle, and lung of newborn mice.

It localises to the secreted. In Mus musculus (Mouse), this protein is von Willebrand factor A domain-containing protein 2 (Vwa2).